The sequence spans 104 residues: uncharacterized protein (104 aa).

The next 2 membrane-spanning stretches (helical) occupy residues 53–73 (IWGI…NWDF) and 74–94 (ILNL…LILI).

Its subcellular location is the cell membrane. This is an uncharacterized protein from Methanocaldococcus jannaschii (strain ATCC 43067 / DSM 2661 / JAL-1 / JCM 10045 / NBRC 100440) (Methanococcus jannaschii).